The sequence spans 148 residues: D-aminoacyl-tRNA deacylase (148 aa).

The Gly-cisPro motif, important for rejection of L-amino acids motif lies at 136 to 137 (GP).

This sequence belongs to the DTD family. Homodimer.

The protein localises to the cytoplasm. The enzyme catalyses glycyl-tRNA(Ala) + H2O = tRNA(Ala) + glycine + H(+). It catalyses the reaction a D-aminoacyl-tRNA + H2O = a tRNA + a D-alpha-amino acid + H(+). An aminoacyl-tRNA editing enzyme that deacylates mischarged D-aminoacyl-tRNAs. Also deacylates mischarged glycyl-tRNA(Ala), protecting cells against glycine mischarging by AlaRS. Acts via tRNA-based rather than protein-based catalysis; rejects L-amino acids rather than detecting D-amino acids in the active site. By recycling D-aminoacyl-tRNA to D-amino acids and free tRNA molecules, this enzyme counteracts the toxicity associated with the formation of D-aminoacyl-tRNA entities in vivo and helps enforce protein L-homochirality. The polypeptide is D-aminoacyl-tRNA deacylase (Streptococcus mutans serotype c (strain ATCC 700610 / UA159)).